Reading from the N-terminus, the 150-residue chain is Large ribosomal subunit protein uL16 (150 aa).

The protein belongs to the universal ribosomal protein uL16 family. As to quaternary structure, component of the small ribosomal subunit. Mature ribosomes consist of a small (40S) and a large (60S) subunit. The 40S subunit contains about 33 different proteins and 1 molecule of RNA (18S). The 60S subunit contains about 49 different proteins and 3 molecules of RNA (25S, 5.8S and 5S).

This is Large ribosomal subunit protein uL16 (RPL10) from Nicotiana tabacum (Common tobacco).